A 350-amino-acid polypeptide reads, in one-letter code: Protein-glutamate methylesterase/protein-glutamine glutaminase 1 (350 aa).

In terms of domain architecture, Response regulatory spans Arg-6–Glu-123. Asp-57 is subject to 4-aspartylphosphate. Residues Leu-159–Ala-350 form the CheB-type methylesterase domain. Catalysis depends on residues Ser-171, His-197, and Asp-293.

Belongs to the CheB family. Phosphorylated by CheA. Phosphorylation of the N-terminal regulatory domain activates the methylesterase activity.

It is found in the cytoplasm. It catalyses the reaction [protein]-L-glutamate 5-O-methyl ester + H2O = L-glutamyl-[protein] + methanol + H(+). The enzyme catalyses L-glutaminyl-[protein] + H2O = L-glutamyl-[protein] + NH4(+). Its function is as follows. Involved in chemotaxis. Part of a chemotaxis signal transduction system that modulates chemotaxis in response to various stimuli. Catalyzes the demethylation of specific methylglutamate residues introduced into the chemoreceptors (methyl-accepting chemotaxis proteins or MCP) by CheR. Also mediates the irreversible deamidation of specific glutamine residues to glutamic acid. The polypeptide is Protein-glutamate methylesterase/protein-glutamine glutaminase 1 (Dechloromonas aromatica (strain RCB)).